Consider the following 125-residue polypeptide: C-X-C motif chemokine 9 (125 aa).

The signal sequence occupies residues 1-21; the sequence is MKKSAPLFLGIIFLTLTGVQG. Intrachain disulfides connect C30/C57 and C32/C73. Residues 91–125 are disordered; that stretch reads QVNQKKKQRKGKKYKKTKKVPKVKRSQRPSQKKTT. Basic residues predominate over residues 93–125; sequence NQKKKQRKGKKYKKTKKVPKVKRSQRPSQKKTT.

This sequence belongs to the intercrine alpha (chemokine CxC) family.

The protein resides in the secreted. Functionally, cytokine that affects the growth, movement, or activation state of cells that participate in immune and inflammatory response. Chemotactic for activated T-cells. Binds to CXCR3. The polypeptide is C-X-C motif chemokine 9 (CXCL9) (Bos taurus (Bovine)).